The sequence spans 143 residues: Large ribosomal subunit protein uL11 (143 aa).

This sequence belongs to the universal ribosomal protein uL11 family. Part of the ribosomal stalk of the 50S ribosomal subunit. Interacts with L10 and the large rRNA to form the base of the stalk. L10 forms an elongated spine to which L12 dimers bind in a sequential fashion forming a multimeric L10(L12)X complex. One or more lysine residues are methylated.

Its function is as follows. Forms part of the ribosomal stalk which helps the ribosome interact with GTP-bound translation factors. In Saccharophagus degradans (strain 2-40 / ATCC 43961 / DSM 17024), this protein is Large ribosomal subunit protein uL11.